A 368-amino-acid polypeptide reads, in one-letter code: Heme A synthase (368 aa).

Helical transmembrane passes span 14-34 (AVRI…LVGG), 104-124 (VIGI…AIGP), 129-149 (ALWI…WMVA), 161-181 (VRLA…VWTL), and 200-220 (ALAL…VAGL). Position 264 (histidine 264) interacts with heme. A run of 3 helical transmembrane segments spans residues 266 to 283 (MLAY…IDAL), 296 to 316 (FLAL…AAPI), and 318 to 338 (LALV…LQAE). Histidine 322 lines the heme pocket.

The protein belongs to the COX15/CtaA family. Type 2 subfamily. As to quaternary structure, interacts with CtaB. Heme b is required as a cofactor.

The protein resides in the cell membrane. The catalysed reaction is Fe(II)-heme o + 2 A + H2O = Fe(II)-heme a + 2 AH2. Its pathway is porphyrin-containing compound metabolism; heme A biosynthesis; heme A from heme O: step 1/1. Catalyzes the conversion of heme O to heme A by two successive hydroxylations of the methyl group at C8. The first hydroxylation forms heme I, the second hydroxylation results in an unstable dihydroxymethyl group, which spontaneously dehydrates, resulting in the formyl group of heme A. The protein is Heme A synthase of Rhodopseudomonas palustris (strain ATCC BAA-98 / CGA009).